Reading from the N-terminus, the 550-residue chain is Phosphatidylinositol 4-kinase gamma 2 (550 aa).

2 Ubiquitin-like domains span residues 34 to 111 (SVLV…YDPL) and 112 to 190 (LVTV…VEDT). Residues 228–247 (VDGLNKGSPPVRSAEGTGGT) are disordered. One can recognise a PI3K/PI4K catalytic domain in the interval 234 to 532 (GSPPVRSAEG…SVLPASSEAT (299 aa)). Residues 240–246 (SAEGTGG) are G-loop. Residues 241–247 (AEGTGGT), K263, and 359–362 (QMFM) each bind ATP. Residues 392 to 400 (ANADRHAGN) are catalytic loop. Positions 415-441 (PIDHGYCLPENFEDCTFEWLYWPQAKL) are activation loop. D417 contributes to the ATP binding site.

This sequence belongs to the PI3/PI4-kinase family. Type II PI4K subfamily.

The protein localises to the membrane. The enzyme catalyses a 1,2-diacyl-sn-glycero-3-phospho-(1D-myo-inositol) + ATP = a 1,2-diacyl-sn-glycero-3-phospho-(1D-myo-inositol 4-phosphate) + ADP + H(+). In terms of biological role, the phosphorylation of phosphatidylinositol (PI) to PI4P is the first committed step in the generation of phosphatidylinositol 4,5-bisphosphate (PIP2), a precursor of the second messenger inositol 1,4,5-trisphosphate (InsP3). The sequence is that of Phosphatidylinositol 4-kinase gamma 2 (PI4KG2) from Arabidopsis thaliana (Mouse-ear cress).